We begin with the raw amino-acid sequence, 236 residues long: GCN5-related N-acetyltransferase 8 (236 aa).

The N-acetyltransferase domain maps to 96–235 (ATITSSPSPD…DALEAFDQVN (140 aa)). Acetyl-CoA is bound by residues 161 to 163 (IFV), 169 to 174 (RKGFGS), 200 to 202 (NVN), and tyrosine 207. Residue tyrosine 207 is the Proton donor of the active site.

The protein belongs to the acetyltransferase family. GNAT subfamily. As to quaternary structure, oligomer. As to expression, expressed throughout the plant.

Its subcellular location is the cytoplasm. It localises to the nucleus. The enzyme catalyses an N-terminal L-alpha-aminoacyl-[protein] + acetyl-CoA = N-terminal N(alpha)-acetyl-L-alpha-aminoacyl-[protein] + CoA + H(+). It carries out the reaction L-lysyl-[protein] + acetyl-CoA = N(6)-acetyl-L-lysyl-[protein] + CoA + H(+). Probable protein acetyltransferase with dual specificity triggering both N-alpha-acetylation (NTA) and epsilon-lysine acetylation (KA). The chain is GCN5-related N-acetyltransferase 8 from Arabidopsis thaliana (Mouse-ear cress).